The primary structure comprises 312 residues: Dihydroorotate dehydrogenase B (NAD(+)), catalytic subunit (312 aa).

Residues Ser23 and 47–48 contribute to the FMN site; that span reads KA. Substrate is bound by residues Lys47 and 71–75; that span reads NAIGL. Positions 103 and 131 each coordinate FMN. Asn131 contributes to the substrate binding site. Cys134 (nucleophile) is an active-site residue. FMN-binding residues include Lys171 and Ile197. 198–199 serves as a coordination point for substrate; that stretch reads NT. FMN-binding positions include Gly223, 249–250, and 271–272; these read GG and GT.

Belongs to the dihydroorotate dehydrogenase family. Type 1 subfamily. As to quaternary structure, heterotetramer of 2 PyrK and 2 PyrD type B subunits. The cofactor is FMN.

It localises to the cytoplasm. The catalysed reaction is (S)-dihydroorotate + NAD(+) = orotate + NADH + H(+). Its pathway is pyrimidine metabolism; UMP biosynthesis via de novo pathway; orotate from (S)-dihydroorotate (NAD(+) route): step 1/1. In terms of biological role, catalyzes the conversion of dihydroorotate to orotate with NAD(+) as electron acceptor. This chain is Dihydroorotate dehydrogenase B (NAD(+)), catalytic subunit (pyrDB), found in Streptococcus pneumoniae serotype 4 (strain ATCC BAA-334 / TIGR4).